A 152-amino-acid polypeptide reads, in one-letter code: MICSICKKGETSVVDSRPTEDGTAIRRRRLCVCGARFTTFERVQFREIMVVKKNGRKSSFDRDKLSKSIYIALKKRPIDTETAEKFISRTSRALEELGQSEISSNTIGTMVMEGLKDLDPVAYVRFASVYRNFREEKDFVQFVDKLDVYKKR.

A zinc finger spans residues Cys-3–Cys-33. The ATP-cone domain maps to Ile-48 to Asp-138.

This sequence belongs to the NrdR family. Zn(2+) is required as a cofactor.

Its function is as follows. Negatively regulates transcription of bacterial ribonucleotide reductase nrd genes and operons by binding to NrdR-boxes. In Pelagibacter ubique (strain HTCC1062), this protein is Transcriptional repressor NrdR.